Reading from the N-terminus, the 99-residue chain is Integration host factor subunit beta (99 aa).

It belongs to the bacterial histone-like protein family. As to quaternary structure, heterodimer of an alpha and a beta chain.

Its function is as follows. This protein is one of the two subunits of integration host factor, a specific DNA-binding protein that functions in genetic recombination as well as in transcriptional and translational control. The polypeptide is Integration host factor subunit beta (Rhizobium etli (strain CIAT 652)).